The primary structure comprises 258 residues: Leucyl/phenylalanyl-tRNA--protein transferase (258 aa).

The segment at 199–220 (GGSDGPAPDQSIGMSSSGGVSD) is disordered. The segment covering 209–220 (SIGMSSSGGVSD) has biased composition (low complexity).

It belongs to the L/F-transferase family.

The protein localises to the cytoplasm. The enzyme catalyses N-terminal L-lysyl-[protein] + L-leucyl-tRNA(Leu) = N-terminal L-leucyl-L-lysyl-[protein] + tRNA(Leu) + H(+). It carries out the reaction N-terminal L-arginyl-[protein] + L-leucyl-tRNA(Leu) = N-terminal L-leucyl-L-arginyl-[protein] + tRNA(Leu) + H(+). The catalysed reaction is L-phenylalanyl-tRNA(Phe) + an N-terminal L-alpha-aminoacyl-[protein] = an N-terminal L-phenylalanyl-L-alpha-aminoacyl-[protein] + tRNA(Phe). In terms of biological role, functions in the N-end rule pathway of protein degradation where it conjugates Leu, Phe and, less efficiently, Met from aminoacyl-tRNAs to the N-termini of proteins containing an N-terminal arginine or lysine. The sequence is that of Leucyl/phenylalanyl-tRNA--protein transferase from Hyphomonas neptunium (strain ATCC 15444).